The chain runs to 395 residues: ATP phosphoribosyltransferase regulatory subunit (395 aa).

Belongs to the class-II aminoacyl-tRNA synthetase family. HisZ subfamily. Heteromultimer composed of HisG and HisZ subunits.

It is found in the cytoplasm. The protein operates within amino-acid biosynthesis; L-histidine biosynthesis; L-histidine from 5-phospho-alpha-D-ribose 1-diphosphate: step 1/9. Required for the first step of histidine biosynthesis. May allow the feedback regulation of ATP phosphoribosyltransferase activity by histidine. This is ATP phosphoribosyltransferase regulatory subunit from Pseudomonas fluorescens (strain Pf0-1).